The chain runs to 860 residues: Linoleate 9S-lipoxygenase A (860 aa).

The 131-residue stretch at 29 to 159 folds into the PLAT domain; it reads NALDFTDLAG…RYKSDRIFFA (131 aa). A Lipoxygenase domain is found at 162–860; it reads PYLPSETPEL…GKGIPNSVSI (699 aa). The interval 209–246 is disordered; sequence PDQGKENVRTTLGGSADYPYPRRGRTGRPPTRTDPKSE. Fe cation contacts are provided by H521, H526, H712, N716, and I860.

The protein belongs to the lipoxygenase family. In terms of assembly, monomer. It depends on Fe cation as a cofactor. In terms of tissue distribution, expressed in germinating seeds as well as in ripening fruit.

It localises to the cytoplasm. The enzyme catalyses (9Z,12Z)-octadecadienoate + O2 = (9S)-hydroperoxy-(10E,12Z)-octadecadienoate. The protein operates within lipid metabolism; oxylipin biosynthesis. In terms of biological role, plant lipoxygenase may be involved in a number of diverse aspects of plant physiology including growth and development, pest resistance, and senescence or responses to wounding. It catalyzes the hydroperoxidation of lipids containing a cis,cis-1,4-pentadiene structure. In Solanum lycopersicum (Tomato), this protein is Linoleate 9S-lipoxygenase A (LOX1.1).